We begin with the raw amino-acid sequence, 272 residues long: Bis(5'-nucleosyl)-tetraphosphatase, symmetrical (272 aa).

The protein belongs to the Ap4A hydrolase family.

It carries out the reaction P(1),P(4)-bis(5'-adenosyl) tetraphosphate + H2O = 2 ADP + 2 H(+). In terms of biological role, hydrolyzes diadenosine 5',5'''-P1,P4-tetraphosphate to yield ADP. This is Bis(5'-nucleosyl)-tetraphosphatase, symmetrical from Ectopseudomonas mendocina (strain ymp) (Pseudomonas mendocina).